Here is a 1110-residue protein sequence, read N- to C-terminus: Ribosome assembly protein 1 (1110 aa).

The tr-type G domain occupies 17–262; sequence SCIRNICIVA…QKLGAKRENL (246 aa). Residues 26–33, 102–106, and 156–159 contribute to the GTP site; these read AHVDHGKT, DSPGH, and NKID. The residue at position 431 (Ser-431) is a Phosphoserine.

This sequence belongs to the TRAFAC class translation factor GTPase superfamily. Classic translation factor GTPase family.

The protein resides in the cytoplasm. It catalyses the reaction GTP + H2O = GDP + phosphate + H(+). With respect to regulation, GTPase activity is stimulated in the presence of 60S subunits. GTPase involved in the biogenesis of the 60S ribosomal subunit and translational activation of ribosomes. Together with SDO1, may trigger the GTP-dependent release of TIF6 from 60S pre-ribosomes in the cytoplasm, thereby activating ribosomes for translation competence by allowing 80S ribosome assembly and facilitating TIF6 recycling to the nucleus, where it is required for 60S rRNA processing and nuclear export. Inhibits GTPase activity of ribosome-bound EF-2. The sequence is that of Ribosome assembly protein 1 (RIA1) from Saccharomyces cerevisiae (strain ATCC 204508 / S288c) (Baker's yeast).